The sequence spans 344 residues: N-acetyl-gamma-glutamyl-phosphate reductase (344 aa).

The active site involves C150.

This sequence belongs to the NAGSA dehydrogenase family. Type 1 subfamily.

The protein resides in the cytoplasm. The catalysed reaction is N-acetyl-L-glutamate 5-semialdehyde + phosphate + NADP(+) = N-acetyl-L-glutamyl 5-phosphate + NADPH + H(+). The protein operates within amino-acid biosynthesis; L-arginine biosynthesis; N(2)-acetyl-L-ornithine from L-glutamate: step 3/4. Functionally, catalyzes the NADPH-dependent reduction of N-acetyl-5-glutamyl phosphate to yield N-acetyl-L-glutamate 5-semialdehyde. The sequence is that of N-acetyl-gamma-glutamyl-phosphate reductase from Ectopseudomonas mendocina (strain ymp) (Pseudomonas mendocina).